The sequence spans 373 residues: 2-oxoglutarate oxidoreductase subunit KorB (373 aa).

The segment at Thr-26 to Asp-50 is disordered. Residues Pro-27–Pro-41 are compositionally biased toward polar residues.

As to quaternary structure, KG oxidoreductase (KOR) is composed of KorA and KorB subunits. Mg(2+) is required as a cofactor.

The catalysed reaction is 2 oxidized [2Fe-2S]-[ferredoxin] + 2-oxoglutarate + CoA = succinyl-CoA + 2 reduced [2Fe-2S]-[ferredoxin] + CO2 + H(+). It functions in the pathway carbohydrate metabolism; tricarboxylic acid cycle. In terms of biological role, component of KG oxidoreductase (KOR) that catalyzes the CoA-dependent oxidative decarboxylation of 2-oxoglutarate (alpha-ketoglutarate, KG) to succinyl-CoA. Methyl viologen can act as electron acceptor in vitro; the physiologic electron acceptor is unknown. Is involved in the alternative TCA pathway that functions concurrently with fatty acid beta-oxidation. Since a growing body of evidence indicates that lipids (for example cholesterol and fatty acids) are a predominant growth substrate for M.tuberculosis during infection, flux through KOR likely represents an important step in intermediary metabolism in vivo. KOR-dependent decarboxylation of KG also appears to be an important source of CO(2) in M.tuberculosis metabolism. This is 2-oxoglutarate oxidoreductase subunit KorB (korB) from Mycobacterium tuberculosis (strain ATCC 25618 / H37Rv).